The chain runs to 603 residues: Myotubularin (603 aa).

A compositionally biased stretch (polar residues) spans 1–13; the sequence is MASASTSKYNSHS. The disordered stretch occupies residues 1 to 25; sequence MASASTSKYNSHSLENESIKRTSRD. Phosphoserine is present on residues S13 and S18. The segment covering 14–25 has biased composition (basic and acidic residues); that stretch reads LENESIKRTSRD. Residues 29–97 enclose the GRAM domain; it reads RDLTEAVPRL…GVISRIEKMG (69 aa). A Myotubularin phosphatase domain is found at 163–538; it reads GWTVYNPVEE…RHLELWVNYY (376 aa). Residues N288, N313, and I314 each coordinate a 1,2-diacyl-sn-glycero-3-phospho-(1D-myo-inositol-3,5-bisphosphate). Residues N288, N313, and I314 each coordinate a 1,2-diacyl-sn-glycero-3-phospho-(1D-myo-inositol-3-phosphate). C375 (phosphocysteine intermediate) is an active-site residue. Residues S376, D377, G378, W379, D380, R381, K417, and R421 each contribute to the a 1,2-diacyl-sn-glycero-3-phospho-(1D-myo-inositol-3,5-bisphosphate) site. Positions 376, 377, 378, 379, 380, and 381 each coordinate a 1,2-diacyl-sn-glycero-3-phospho-(1D-myo-inositol-3-phosphate). R421 is a binding site for a 1,2-diacyl-sn-glycero-3-phospho-(1D-myo-inositol-3-phosphate). T495 bears the Phosphothreonine mark. The segment at 579–603 is disordered; it reads SAKLSDPPTSPSSPSQMMPHVQTHF. S588 carries the phosphoserine modification.

It belongs to the protein-tyrosine phosphatase family. Non-receptor class myotubularin subfamily. Heterodimer with MTMR12. Interacts with KMT2A/MLL1 (via SET domain). Interacts with DES in skeletal muscle but not in cardiac muscle. Interacts with SPEG.

It is found in the cytoplasm. The protein localises to the cell membrane. It localises to the cell projection. The protein resides in the filopodium. Its subcellular location is the ruffle. It is found in the late endosome. The protein localises to the myofibril. It localises to the sarcomere. The catalysed reaction is a 1,2-diacyl-sn-glycero-3-phospho-(1D-myo-inositol-3-phosphate) + H2O = a 1,2-diacyl-sn-glycero-3-phospho-(1D-myo-inositol) + phosphate. It carries out the reaction a 1,2-diacyl-sn-glycero-3-phospho-(1D-myo-inositol-3,5-bisphosphate) + H2O = a 1,2-diacyl-sn-glycero-3-phospho-(1D-myo-inositol-5-phosphate) + phosphate. The enzyme catalyses 1,2-dioctanoyl-sn-glycero-3-phospho-(1-D-myo-inositol-3-phosphate) + H2O = 1,2-dioctanoyl-sn-glycero-3-phospho-(1D-myo-inositol) + phosphate. It catalyses the reaction 1,2-dioctanoyl-sn-glycero-3-phospho-(1D-myo-inositol-3,5-bisphosphate) + H2O = 1,2-dioctanoyl-sn-glycero-3-phospho-(1D-myo-inositol-5-phosphate) + phosphate. The catalysed reaction is 1,2-dihexadecanoyl-sn-glycero-3-phospho-(1D-myo-inositol-3,5-phosphate) + H2O = 1,2-dihexadecanoyl-sn-glycero-3-phospho-(1D-myo-inositol-5-phosphate) + phosphate. Allosterically activated by phosphatidylinositol 5-phosphate (PI5P). Its function is as follows. Lipid phosphatase which dephosphorylates phosphatidylinositol 3-monophosphate (PI3P) and phosphatidylinositol 3,5-bisphosphate (PI(3,5)P2). Has also been shown to dephosphorylate phosphotyrosine- and phosphoserine-containing peptides. Negatively regulates EGFR degradation through regulation of EGFR trafficking from the late endosome to the lysosome. Plays a role in vacuolar formation and morphology. Regulates desmin intermediate filament assembly and architecture. Plays a role in mitochondrial morphology and positioning. Required for skeletal muscle maintenance but not for myogenesis. In skeletal muscles, stabilizes MTMR12 protein levels. In Homo sapiens (Human), this protein is Myotubularin.